We begin with the raw amino-acid sequence, 240 residues long: Putative glycyl-radical enzyme activating enzyme MJ1227 (240 aa).

The region spanning 14 to 232 (IDYPKKASAV…KKYIDNVVIR (219 aa)) is the Radical SAM core domain. Residues Cys-29, Cys-33, and Cys-36 each coordinate [4Fe-4S] cluster. S-adenosyl-L-methionine is bound by residues 35–37 (YCH), Gly-71, and 126–128 (FDK).

The protein belongs to the organic radical-activating enzymes family. [4Fe-4S] cluster is required as a cofactor.

The catalysed reaction is glycyl-[protein] + reduced [flavodoxin] + S-adenosyl-L-methionine = glycin-2-yl radical-[protein] + semiquinone [flavodoxin] + 5'-deoxyadenosine + L-methionine + H(+). This is Putative glycyl-radical enzyme activating enzyme MJ1227 from Methanocaldococcus jannaschii (strain ATCC 43067 / DSM 2661 / JAL-1 / JCM 10045 / NBRC 100440) (Methanococcus jannaschii).